A 199-amino-acid polypeptide reads, in one-letter code: Protein shisa-like-1 (199 aa).

Residues 1 to 25 (MTSCGQQSLNVLAVLFSLLFSAVLS) form the signal peptide. Residues 26–97 (AHFRVCEPYT…SEGYMHNNYT (72 aa)) lie on the Extracellular side of the membrane. 2 N-linked (GlcNAc...) asparagine glycosylation sites follow: asparagine 53 and asparagine 95. A helical transmembrane segment spans residues 98 to 118 (ALLGVWIYGFFVLMLLVLDLL). Topologically, residues 119–199 (YYSAMNYDIC…PLMTFQSSSA (81 aa)) are cytoplasmic. A disordered region spans residues 146 to 199 (PRRWGNPARAPRPGQRAPQPQPPPGPLPQAPQAVHTLRGDAHSPPLMTFQSSSA). The segment covering 152–163 (PARAPRPGQRAP) has biased composition (low complexity). Over residues 164–174 (QPQPPPGPLPQ) the composition is skewed to pro residues.

It belongs to the shisa family.

Its subcellular location is the membrane. This Homo sapiens (Human) protein is Protein shisa-like-1.